Consider the following 233-residue polypeptide: Small ribosomal subunit protein uS2 (233 aa).

This sequence belongs to the universal ribosomal protein uS2 family.

In Bacillus anthracis, this protein is Small ribosomal subunit protein uS2.